The following is a 901-amino-acid chain: HTH-type transcriptional regulator MalT (901 aa).

Residue 39–46 coordinates ATP; that stretch reads SPAGYGKT. An HTH luxR-type domain is found at 829 to 894; sequence ELIRTSPLTQ…DAVQHAQQLL (66 aa). The H-T-H motif DNA-binding region spans 853-872; the sequence is NEQIAGELEVAATTIKTHIR.

It belongs to the MalT family. Monomer in solution. Oligomerizes to an active state in the presence of the positive effectors ATP and maltotriose.

Activated by ATP and maltotriose, which are both required for DNA binding. In terms of biological role, positively regulates the transcription of the maltose regulon whose gene products are responsible for uptake and catabolism of malto-oligosaccharides. Specifically binds to the promoter region of its target genes, recognizing a short DNA motif called the MalT box. The protein is HTH-type transcriptional regulator MalT of Escherichia fergusonii (strain ATCC 35469 / DSM 13698 / CCUG 18766 / IAM 14443 / JCM 21226 / LMG 7866 / NBRC 102419 / NCTC 12128 / CDC 0568-73).